The primary structure comprises 438 residues: Enolase (438 aa).

Position 163 (glutamine 163) interacts with (2R)-2-phosphoglycerate. Glutamate 205 functions as the Proton donor in the catalytic mechanism. Residues aspartate 243, glutamate 292, and aspartate 319 each coordinate Mg(2+). Positions 344, 373, 374, and 395 each coordinate (2R)-2-phosphoglycerate. The active-site Proton acceptor is the lysine 344.

The protein belongs to the enolase family. Mg(2+) serves as cofactor.

The protein localises to the cytoplasm. Its subcellular location is the secreted. It is found in the cell surface. It catalyses the reaction (2R)-2-phosphoglycerate = phosphoenolpyruvate + H2O. The protein operates within carbohydrate degradation; glycolysis; pyruvate from D-glyceraldehyde 3-phosphate: step 4/5. Functionally, catalyzes the reversible conversion of 2-phosphoglycerate (2-PG) into phosphoenolpyruvate (PEP). It is essential for the degradation of carbohydrates via glycolysis. The polypeptide is Enolase (Streptococcus agalactiae).